Reading from the N-terminus, the 475-residue chain is Ribulose bisphosphate carboxylase large chain (475 aa).

The propeptide occupies 1-2; it reads MS. N-acetylproline is present on proline 3. Lysine 14 is subject to N6,N6,N6-trimethyllysine. Residues asparagine 123 and threonine 173 each coordinate substrate. Residue lysine 175 is the Proton acceptor of the active site. Lysine 177 provides a ligand contact to substrate. Positions 201, 203, and 204 each coordinate Mg(2+). An N6-carboxylysine modification is found at lysine 201. Histidine 294 functions as the Proton acceptor in the catalytic mechanism. Positions 295, 327, and 379 each coordinate substrate.

This sequence belongs to the RuBisCO large chain family. Type I subfamily. As to quaternary structure, heterohexadecamer of 8 large chains and 8 small chains; disulfide-linked. The disulfide link is formed within the large subunit homodimers. Mg(2+) is required as a cofactor. The disulfide bond which can form in the large chain dimeric partners within the hexadecamer appears to be associated with oxidative stress and protein turnover.

Its subcellular location is the plastid. The protein localises to the chloroplast. It carries out the reaction 2 (2R)-3-phosphoglycerate + 2 H(+) = D-ribulose 1,5-bisphosphate + CO2 + H2O. The catalysed reaction is D-ribulose 1,5-bisphosphate + O2 = 2-phosphoglycolate + (2R)-3-phosphoglycerate + 2 H(+). RuBisCO catalyzes two reactions: the carboxylation of D-ribulose 1,5-bisphosphate, the primary event in carbon dioxide fixation, as well as the oxidative fragmentation of the pentose substrate in the photorespiration process. Both reactions occur simultaneously and in competition at the same active site. The sequence is that of Ribulose bisphosphate carboxylase large chain from Oenothera argillicola (Appalachian evening primrose).